Consider the following 884-residue polypeptide: Translation initiation factor IF-2 (884 aa).

The segment at 93 to 288 is disordered; it reads VNTPEAEQAK…KGKRKPSTLQ (196 aa). Residues 99–209 are compositionally biased toward basic and acidic residues; it reads EQAKAEEQAQ…KMAAENEGKW (111 aa). Polar residues predominate over residues 216–229; that stretch reads QTESADYHVTTSQH. A compositionally biased stretch (basic and acidic residues) spans 231–246; it reads RAAEDENDAKVEGDRR. Over residues 247 to 261 the composition is skewed to basic residues; sequence SRTRGGKATKQKKGN. The segment covering 262-275 has biased composition (basic and acidic residues); that stretch reads KLSESKADREEARA. The tr-type G domain occupies 383–552; the sequence is HRAPVVTIMG…LLQAEVLELK (170 aa). Residues 392-399 are G1; the sequence is GHVDHGKT. Residue 392–399 participates in GTP binding; the sequence is GHVDHGKT. The tract at residues 417–421 is G2; it reads GITQH. A G3 region spans residues 438 to 441; that stretch reads DTPG. GTP contacts are provided by residues 438 to 442 and 492 to 495; these read DTPGH and NKID. A G4 region spans residues 492–495; that stretch reads NKID. The G5 stretch occupies residues 528–530; that stretch reads SAK.

Belongs to the TRAFAC class translation factor GTPase superfamily. Classic translation factor GTPase family. IF-2 subfamily.

It is found in the cytoplasm. In terms of biological role, one of the essential components for the initiation of protein synthesis. Protects formylmethionyl-tRNA from spontaneous hydrolysis and promotes its binding to the 30S ribosomal subunits. Also involved in the hydrolysis of GTP during the formation of the 70S ribosomal complex. The polypeptide is Translation initiation factor IF-2 (Yersinia pestis bv. Antiqua (strain Antiqua)).